The sequence spans 378 residues: Integrator complex assembly factor WDR73 (378 aa).

6 WD repeats span residues 73 to 113 (DFKV…VWQV), 121 to 163 (KAVS…VVDL), 167 to 205 (KTTY…LVDT), 214 to 255 (NRSP…LLDP), 266 to 305 (QCPV…VYDA), and 322 to 371 (EPLF…VWDW).

The protein belongs to the WD repeat WDR73 family. In terms of assembly, interacts with INTS9 and INTS11; the interaction is direct. Part of the multiprotein complex composed of BRAT1, WDR73, as well as integrator complex subunits INTS9 and INTS11. As to expression, expressed in kidney and brain. In the kidney, expressed in glomeruli, most probably in podocytes, and in tubules (at protein level). In the brain, expressed in the cerebellum, with high levels in Purkinje cells and their projecting axons, in the deep cerebellar nuclei and in pyramidal neurons of the cerebral cortex (at protein level). In the white matter, mainly present in astrocytes, but not in oligodendrocytes (at protein level). Also highly expressed in endothelial cells of cerebral capillaries (at protein level).

It is found in the cytoplasm. The protein localises to the cytoskeleton. Its subcellular location is the spindle. It localises to the spindle pole. The protein resides in the cleavage furrow. Component of a multiprotein complex required for the assembly of the RNA endonuclease module of the integrator complex. Associates with INTS9 and INTS11 in the cytoplasm, stabilizing the INTS9-INTS11 heterodimer and blocking the active site of INTS11. BRAT1 then joins the complex and plugs the active site of INTS11, leading to WDR73 release and nuclear import of INTS9 and INTS11. This Homo sapiens (Human) protein is Integrator complex assembly factor WDR73.